The primary structure comprises 367 residues: NADH-quinone oxidoreductase subunit H (367 aa).

Helical transmembrane passes span 18-38 (VLLF…VAYL), 87-107 (LCFL…WAVI), 132-152 (IGVL…IIAG), 180-200 (LTIV…IVIA), 204-224 (MPYW…ISAL), 257-277 (FFLG…IFFF), 291-311 (IIPG…CFIW), and 328-348 (GWKV…GILV).

It belongs to the complex I subunit 1 family. In terms of assembly, NDH-1 is composed of 14 different subunits. Subunits NuoA, H, J, K, L, M, N constitute the membrane sector of the complex.

The protein resides in the cell inner membrane. It catalyses the reaction a quinone + NADH + 5 H(+)(in) = a quinol + NAD(+) + 4 H(+)(out). NDH-1 shuttles electrons from NADH, via FMN and iron-sulfur (Fe-S) centers, to quinones in the respiratory chain. The immediate electron acceptor for the enzyme in this species is believed to be ubiquinone. Couples the redox reaction to proton translocation (for every two electrons transferred, four hydrogen ions are translocated across the cytoplasmic membrane), and thus conserves the redox energy in a proton gradient. This subunit may bind ubiquinone. This chain is NADH-quinone oxidoreductase subunit H, found in Ehrlichia ruminantium (strain Gardel).